Consider the following 414-residue polypeptide: Serine--tRNA ligase (414 aa).

230 to 232 (TSE) lines the L-serine pocket. Residue 261 to 263 (RQE) coordinates ATP. Glu-284 lines the L-serine pocket. Residue 348 to 351 (EISS) coordinates ATP. Ser-382 is an L-serine binding site.

The protein belongs to the class-II aminoacyl-tRNA synthetase family. Type-1 seryl-tRNA synthetase subfamily. Homodimer. The tRNA molecule binds across the dimer.

The protein resides in the cytoplasm. The enzyme catalyses tRNA(Ser) + L-serine + ATP = L-seryl-tRNA(Ser) + AMP + diphosphate + H(+). The catalysed reaction is tRNA(Sec) + L-serine + ATP = L-seryl-tRNA(Sec) + AMP + diphosphate + H(+). The protein operates within aminoacyl-tRNA biosynthesis; selenocysteinyl-tRNA(Sec) biosynthesis; L-seryl-tRNA(Sec) from L-serine and tRNA(Sec): step 1/1. Its function is as follows. Catalyzes the attachment of serine to tRNA(Ser). Is also able to aminoacylate tRNA(Sec) with serine, to form the misacylated tRNA L-seryl-tRNA(Sec), which will be further converted into selenocysteinyl-tRNA(Sec). In Campylobacter fetus subsp. fetus (strain 82-40), this protein is Serine--tRNA ligase.